The sequence spans 261 residues: MSDILDRIIAVKREEVRAAEQSAPLEELRLEASSRDIRDFVGALRAKHTAGLAAVISEVKKASPSKGVLREHFVPAEIARSYEKHGAACLSVLTDVQFFQGSVAYLEEARAACNLPVLRKDFIVDPYQIVEARAMGADAILLIAAALETSQMQDLEALAHSLGLAVLVEVHDHDELMESLTLKTPLIGINNRNLRTFETSIETTIGMLEAIPDDRIVVTESGILSRADVERLRAMDVHTFLVGEAFMRANEPGVELARMFF.

Belongs to the TrpC family.

The enzyme catalyses 1-(2-carboxyphenylamino)-1-deoxy-D-ribulose 5-phosphate + H(+) = (1S,2R)-1-C-(indol-3-yl)glycerol 3-phosphate + CO2 + H2O. Its pathway is amino-acid biosynthesis; L-tryptophan biosynthesis; L-tryptophan from chorismate: step 4/5. This chain is Indole-3-glycerol phosphate synthase, found in Paraburkholderia phytofirmans (strain DSM 17436 / LMG 22146 / PsJN) (Burkholderia phytofirmans).